We begin with the raw amino-acid sequence, 338 residues long: Nucleoid-associated protein HI_0839 (338 aa).

The protein belongs to the YejK family.

Its subcellular location is the cytoplasm. It is found in the nucleoid. The chain is Nucleoid-associated protein HI_0839 from Haemophilus influenzae (strain ATCC 51907 / DSM 11121 / KW20 / Rd).